The primary structure comprises 208 residues: 3-demethoxyubiquinol 3-hydroxylase (208 aa).

Glutamate 57, glutamate 87, histidine 90, glutamate 139, glutamate 171, and histidine 174 together coordinate Fe cation.

This sequence belongs to the COQ7 family. Requires Fe cation as cofactor.

Its subcellular location is the cell membrane. It carries out the reaction a 5-methoxy-2-methyl-3-(all-trans-polyprenyl)benzene-1,4-diol + AH2 + O2 = a 3-demethylubiquinol + A + H2O. The protein operates within cofactor biosynthesis; ubiquinone biosynthesis. Functionally, catalyzes the hydroxylation of 2-nonaprenyl-3-methyl-6-methoxy-1,4-benzoquinol during ubiquinone biosynthesis. The polypeptide is 3-demethoxyubiquinol 3-hydroxylase (Nitrosomonas europaea (strain ATCC 19718 / CIP 103999 / KCTC 2705 / NBRC 14298)).